A 99-amino-acid polypeptide reads, in one-letter code: A-type ATP synthase subunit F (99 aa).

The protein belongs to the V-ATPase F subunit family. In terms of assembly, has multiple subunits with at least A(3), B(3), C, D, E, F, H, I and proteolipid K(x).

Its subcellular location is the cell membrane. Functionally, component of the A-type ATP synthase that produces ATP from ADP in the presence of a proton gradient across the membrane. The protein is A-type ATP synthase subunit F of Methanococcus maripaludis (strain C7 / ATCC BAA-1331).